Here is a 449-residue protein sequence, read N- to C-terminus: Bifunctional protein GlmU (449 aa).

The pyrophosphorylase stretch occupies residues 1-226 (MVIVAVLAAG…YEEILGVNDR (226 aa)). Residues 7-10 (LAAG), Lys-21, Gln-73, and 78-79 (GT) contribute to the UDP-N-acetyl-alpha-D-glucosamine site. A Mg(2+)-binding site is contributed by Asp-103. UDP-N-acetyl-alpha-D-glucosamine is bound by residues Gly-140, Glu-155, Asn-170, and Asn-224. Asn-224 contacts Mg(2+). Positions 227-247 (VQLAAAYQVLQNRIKKAWMQA) are linker. The segment at 248 to 449 (GVTLIDPASI…VVKPNWEPEA (202 aa)) is N-acetyltransferase. Residues Arg-329 and Lys-347 each contribute to the UDP-N-acetyl-alpha-D-glucosamine site. His-359 acts as the Proton acceptor in catalysis. Positions 362 and 373 each coordinate UDP-N-acetyl-alpha-D-glucosamine. Acetyl-CoA-binding positions include Ala-376, 382 to 383 (NY), Ala-419, and Arg-436.

The protein in the N-terminal section; belongs to the N-acetylglucosamine-1-phosphate uridyltransferase family. It in the C-terminal section; belongs to the transferase hexapeptide repeat family. In terms of assembly, homotrimer. Mg(2+) serves as cofactor.

It is found in the cytoplasm. It catalyses the reaction alpha-D-glucosamine 1-phosphate + acetyl-CoA = N-acetyl-alpha-D-glucosamine 1-phosphate + CoA + H(+). The catalysed reaction is N-acetyl-alpha-D-glucosamine 1-phosphate + UTP + H(+) = UDP-N-acetyl-alpha-D-glucosamine + diphosphate. It functions in the pathway nucleotide-sugar biosynthesis; UDP-N-acetyl-alpha-D-glucosamine biosynthesis; N-acetyl-alpha-D-glucosamine 1-phosphate from alpha-D-glucosamine 6-phosphate (route II): step 2/2. It participates in nucleotide-sugar biosynthesis; UDP-N-acetyl-alpha-D-glucosamine biosynthesis; UDP-N-acetyl-alpha-D-glucosamine from N-acetyl-alpha-D-glucosamine 1-phosphate: step 1/1. Its pathway is bacterial outer membrane biogenesis; LPS lipid A biosynthesis. Catalyzes the last two sequential reactions in the de novo biosynthetic pathway for UDP-N-acetylglucosamine (UDP-GlcNAc). The C-terminal domain catalyzes the transfer of acetyl group from acetyl coenzyme A to glucosamine-1-phosphate (GlcN-1-P) to produce N-acetylglucosamine-1-phosphate (GlcNAc-1-P), which is converted into UDP-GlcNAc by the transfer of uridine 5-monophosphate (from uridine 5-triphosphate), a reaction catalyzed by the N-terminal domain. This is Bifunctional protein GlmU from Thermosynechococcus vestitus (strain NIES-2133 / IAM M-273 / BP-1).